An 878-amino-acid chain; its full sequence is Pyruvate dehydrogenase phosphatase regulatory subunit, mitochondrial (878 aa).

Residues 1-26 (MLPRLLAVVRGPGSCRGWREGSPARG) constitute a mitochondrion transit peptide.

The protein belongs to the GcvT family. In terms of assembly, heterodimer of a catalytic (PDP1) and a regulatory (PDPR) subunit.

Its subcellular location is the mitochondrion matrix. Its function is as follows. Decreases the sensitivity of PDP1 to magnesium ions, and this inhibition is reversed by the polyamine spermine. The protein is Pyruvate dehydrogenase phosphatase regulatory subunit, mitochondrial (PDPR) of Bos taurus (Bovine).